A 564-amino-acid polypeptide reads, in one-letter code: Putative zinc metalloproteinase in scaA 5'region (564 aa).

Residues 1-564 form the Peptidase M13 domain; sequence MTRLQDDFYD…KEADFSAEEF (564 aa). His-478 contacts Zn(2+). Glu-479 is an active-site residue. Zn(2+) contacts are provided by His-482 and Glu-538. Asp-542 functions as the Proton donor in the catalytic mechanism.

Belongs to the peptidase M13 family. Zn(2+) is required as a cofactor.

In Streptococcus gordonii (strain Challis / ATCC 35105 / BCRC 15272 / CH1 / DL1 / V288), this protein is Putative zinc metalloproteinase in scaA 5'region.